The primary structure comprises 226 residues: Thaumatin-like protein (226 aa).

The N-terminal stretch at 1 to 24 (MNFSKNLPLLVSLWAITFFAYTHA) is a signal peptide. 8 disulfide bridges follow: Cys33-Cys225, Cys74-Cys84, Cys89-Cys95, Cys140-Cys214, Cys145-Cys197, Cys153-Cys163, Cys167-Cys176, and Cys177-Cys184.

The protein belongs to the thaumatin family. Expressed in fruits.

It is found in the secreted. 3D-structure modeling suggests it may have endo-(1,3)-beta-glucanase activity. This is Thaumatin-like protein from Olea europaea (Common olive).